Consider the following 533-residue polypeptide: Retinoid isomerohydrolase (533 aa).

Residue serine 2 is modified to N-acetylserine. Phosphothreonine occurs at positions 101 and 105. Cysteine 112 is lipidated: S-palmitoyl cysteine; in membrane form. An N6-acetyllysine modification is found at lysine 113. Phosphoserine is present on serine 117. Residue histidine 180 participates in Fe cation binding. A lipid anchor (S-palmitoyl cysteine; in membrane form) is attached at cysteine 231. Fe cation-binding residues include histidine 241 and histidine 313. S-palmitoyl cysteine; in membrane form attachment occurs at residues cysteine 329 and cysteine 330. Histidine 527 is a Fe cation binding site.

It belongs to the carotenoid oxygenase family. Interacts with MYO7A; this mediates light-dependent intracellular transport of RPE65. It depends on Fe(2+) as a cofactor. Post-translationally, palmitoylation by LRAT regulates ligand binding specificity; the palmitoylated form (membrane form) specifically binds all-trans-retinyl-palmitate, while the soluble unpalmitoylated form binds all-trans-retinol (vitamin A). In terms of tissue distribution, retinal pigment epithelium specific.

It localises to the cytoplasm. The protein localises to the cell membrane. The protein resides in the microsome membrane. The enzyme catalyses an all-trans-retinyl ester + H2O = 11-cis-retinol + a fatty acid + H(+). It carries out the reaction lutein = (3R,3'S)-zeaxanthin. The catalysed reaction is all-trans-retinyl hexadecanoate + H2O = 11-cis-retinol + hexadecanoate + H(+). Critical isomerohydrolase in the retinoid cycle involved in regeneration of 11-cis-retinal, the chromophore of rod and cone opsins. Catalyzes the cleavage and isomerization of all-trans-retinyl fatty acid esters to 11-cis-retinol which is further oxidized by 11-cis retinol dehydrogenase to 11-cis-retinal for use as visual chromophore. Essential for the production of 11-cis retinal for both rod and cone photoreceptors. Also capable of catalyzing the isomerization of lutein to meso-zeaxanthin an eye-specific carotenoid. The soluble form binds vitamin A (all-trans-retinol), making it available for LRAT processing to all-trans-retinyl ester. The membrane form, palmitoylated by LRAT, binds all-trans-retinyl esters, making them available for IMH (isomerohydrolase) processing to all-cis-retinol. The soluble form is regenerated by transferring its palmitoyl groups onto 11-cis-retinol, a reaction catalyzed by LRAT. This is Retinoid isomerohydrolase (RPE65) from Bos taurus (Bovine).